Consider the following 427-residue polypeptide: 3-phosphoshikimate 1-carboxyvinyltransferase (427 aa).

Lysine 22, serine 23, and arginine 27 together coordinate 3-phosphoshikimate. Lysine 22 contributes to the phosphoenolpyruvate binding site. Phosphoenolpyruvate is bound by residues glycine 96 and arginine 124. 7 residues coordinate 3-phosphoshikimate: serine 169, serine 170, glutamine 171, serine 197, aspartate 313, asparagine 336, and lysine 340. Glutamine 171 lines the phosphoenolpyruvate pocket. Residue aspartate 313 is the Proton acceptor of the active site. 3 residues coordinate phosphoenolpyruvate: arginine 344, arginine 386, and lysine 411.

This sequence belongs to the EPSP synthase family. In terms of assembly, monomer.

The protein localises to the cytoplasm. It carries out the reaction 3-phosphoshikimate + phosphoenolpyruvate = 5-O-(1-carboxyvinyl)-3-phosphoshikimate + phosphate. It participates in metabolic intermediate biosynthesis; chorismate biosynthesis; chorismate from D-erythrose 4-phosphate and phosphoenolpyruvate: step 6/7. In terms of biological role, catalyzes the transfer of the enolpyruvyl moiety of phosphoenolpyruvate (PEP) to the 5-hydroxyl of shikimate-3-phosphate (S3P) to produce enolpyruvyl shikimate-3-phosphate and inorganic phosphate. This is 3-phosphoshikimate 1-carboxyvinyltransferase from Escherichia coli O8 (strain IAI1).